Here is a 39-residue protein sequence, read N- to C-terminus: Photosystem II reaction center protein X (39 aa).

Residues 10–30 (WSLLWGTAIVVIPVTVGLIFI) form a helical membrane-spanning segment.

It belongs to the PsbX family. Type 1 subfamily. PSII is composed of 1 copy each of membrane proteins PsbA, PsbB, PsbC, PsbD, PsbE, PsbF, PsbH, PsbI, PsbJ, PsbK, PsbL, PsbM, PsbT, PsbX, PsbY, PsbZ, Psb30/Ycf12, peripheral proteins PsbO, CyanoQ (PsbQ), PsbU, PsbV and a large number of cofactors. It forms dimeric complexes.

The protein resides in the cellular thylakoid membrane. Its function is as follows. Involved in the binding and/or turnover of quinones at the Q(B) site of photosystem II (PSII). PSII is a light-driven water plastoquinone oxidoreductase, using light energy to abstract electrons from H(2)O, generating a proton gradient subsequently used for ATP formation. The sequence is that of Photosystem II reaction center protein X from Nostoc punctiforme (strain ATCC 29133 / PCC 73102).